Consider the following 477-residue polypeptide: Histidine permease HisP (477 aa).

12 consecutive transmembrane segments (helical) span residues 16–36 (ITMI…SGAT), 40–60 (AGPW…YFVM), 86–106 (PAFG…TIAV), 126–146 (IFSG…VGAF), 156–176 (IKVI…FGVL), 192–212 (HGFV…GFSF), 238–258 (SIFW…AAII), 284–304 (IGFA…VISS), 337–359 (IPFY…GIFG), 364–386 (LFLI…VSHI), 408–428 (WFPF…INLD), and 437–457 (WGEG…YFGY).

This sequence belongs to the amino acid-polyamine-organocation (APC) superfamily. Amino acid transporter (AAT) (TC 2.A.3.1) family.

Its subcellular location is the cell membrane. Functionally, involved in histidine uptake. Has low affinity for arginine and lysine. Plays no significant role in the excretion of accumulated histidine. The protein is Histidine permease HisP of Lactococcus lactis subsp. cremoris (strain MG1363).